Here is a 145-residue protein sequence, read N- to C-terminus: Putative pre-16S rRNA nuclease (145 aa).

Belongs to the YqgF nuclease family.

It localises to the cytoplasm. Functionally, could be a nuclease involved in processing of the 5'-end of pre-16S rRNA. This is Putative pre-16S rRNA nuclease from Pseudomonas fluorescens (strain SBW25).